A 413-amino-acid chain; its full sequence is Branched-chain-amino-acid aminotransferase 3, chloroplastic (413 aa).

A chloroplast-targeting transit peptide spans Met1–Arg60. An N6-(pyridoxal phosphate)lysine modification is found at Lys259.

It belongs to the class-IV pyridoxal-phosphate-dependent aminotransferase family. It depends on pyridoxal 5'-phosphate as a cofactor. Expressed in the phloem cells.

The protein localises to the plastid. It is found in the chloroplast. The catalysed reaction is L-leucine + 2-oxoglutarate = 4-methyl-2-oxopentanoate + L-glutamate. The enzyme catalyses L-isoleucine + 2-oxoglutarate = (S)-3-methyl-2-oxopentanoate + L-glutamate. It carries out the reaction L-valine + 2-oxoglutarate = 3-methyl-2-oxobutanoate + L-glutamate. It catalyses the reaction a 2-oxocarboxylate + L-methionine = 4-methylsulfanyl-2-oxobutanoate + an L-alpha-amino acid. It functions in the pathway amino-acid biosynthesis; L-isoleucine biosynthesis; L-isoleucine from 2-oxobutanoate: step 4/4. It participates in amino-acid biosynthesis; L-leucine biosynthesis; L-leucine from 3-methyl-2-oxobutanoate: step 4/4. Its pathway is amino-acid biosynthesis; L-valine biosynthesis; L-valine from pyruvate: step 4/4. Inhibited by Ser- or Thr-derived imine. Functionally, converts 2-oxo acids to branched-chain amino acids. Acts on leucine, isoleucine and valine. Also involved in methionine chain elongation cycle of aliphatic glucosinolate formation. Catalyzes the conversion of 5-methylthiopentyl-2-oxo and 6-methylthiohexyl-2-oxo acids to their respective Met derivatives, homomethionine and dihomo-methionine, respectively. The sequence is that of Branched-chain-amino-acid aminotransferase 3, chloroplastic from Arabidopsis thaliana (Mouse-ear cress).